The primary structure comprises 172 residues: Exocyst complex component 1-like (172 aa).

The sequence is that of Exocyst complex component 1-like from Mus musculus (Mouse).